Here is a 111-residue protein sequence, read N- to C-terminus: Secreted RxLR effector protein 82 (111 aa).

Positions Met1–Leu17 are cleaved as a signal peptide. Positions Arg28–Arg31 match the RxLR motif.

It belongs to the RxLR effector family.

It localises to the secreted. The protein resides in the host nucleus. In terms of biological role, secreted effector that acts as an elicitor that induces cell death in host plant cells. This chain is Secreted RxLR effector protein 82, found in Plasmopara viticola (Downy mildew of grapevine).